Here is a 308-residue protein sequence, read N- to C-terminus: Aspartate carbamoyltransferase catalytic subunit (308 aa).

Arg59 and Thr60 together coordinate carbamoyl phosphate. Lys87 is a binding site for L-aspartate. The carbamoyl phosphate site is built by Arg109, His137, and Gln140. Residues Arg170 and Arg224 each coordinate L-aspartate. Carbamoyl phosphate is bound by residues Gly265 and Pro266.

This sequence belongs to the aspartate/ornithine carbamoyltransferase superfamily. ATCase family. In terms of assembly, heterododecamer (2C3:3R2) of six catalytic PyrB chains organized as two trimers (C3), and six regulatory PyrI chains organized as three dimers (R2).

The enzyme catalyses carbamoyl phosphate + L-aspartate = N-carbamoyl-L-aspartate + phosphate + H(+). It participates in pyrimidine metabolism; UMP biosynthesis via de novo pathway; (S)-dihydroorotate from bicarbonate: step 2/3. Functionally, catalyzes the condensation of carbamoyl phosphate and aspartate to form carbamoyl aspartate and inorganic phosphate, the committed step in the de novo pyrimidine nucleotide biosynthesis pathway. This chain is Aspartate carbamoyltransferase catalytic subunit, found in Flavobacterium johnsoniae (strain ATCC 17061 / DSM 2064 / JCM 8514 / BCRC 14874 / CCUG 350202 / NBRC 14942 / NCIMB 11054 / UW101) (Cytophaga johnsonae).